We begin with the raw amino-acid sequence, 465 residues long: NADH-quinone oxidoreductase subunit N (465 aa).

A run of 13 helical transmembrane segments spans residues 6 to 26 (ILPE…GIVF), 30 to 50 (TINL…ILSA), 66 to 86 (LYIR…LLLL), 98 to 118 (SILI…NNLI), 156 to 176 (ALSS…TGLV), 194 to 214 (IVFG…IAPF), 226 to 246 (PTIV…TFLI), 261 to 281 (FQPV…FGAL), 289 to 309 (LLAY…SIFT), 317 to 337 (LIYL…FIQI), 363 to 383 (ILLF…KLFI), 391 to 411 (GFIG…YYYL), and 432 to 452 (SLFI…MCVE).

Belongs to the complex I subunit 2 family. NDH-1 is composed of 14 different subunits. Subunits NuoA, H, J, K, L, M, N constitute the membrane sector of the complex.

The protein resides in the cell membrane. It catalyses the reaction a quinone + NADH + 5 H(+)(in) = a quinol + NAD(+) + 4 H(+)(out). Its function is as follows. NDH-1 shuttles electrons from NADH, via FMN and iron-sulfur (Fe-S) centers, to quinones in the respiratory chain. The immediate electron acceptor for the enzyme in this species is believed to be ubiquinone. Couples the redox reaction to proton translocation (for every two electrons transferred, four hydrogen ions are translocated across the cytoplasmic membrane), and thus conserves the redox energy in a proton gradient. The chain is NADH-quinone oxidoreductase subunit N from Wolbachia sp. subsp. Brugia malayi (strain TRS).